Here is a 420-residue protein sequence, read N- to C-terminus: Pre-mRNA-splicing factor RBM22 (420 aa).

Position 2 is an N-acetylalanine (A2). A phosphoserine mark is found at S4 and S102. Residues K139 and K149 each participate in a glycyl lysine isopeptide (Lys-Gly) (interchain with G-Cter in SUMO2) cross-link. A C3H1-type zinc finger spans residues 159-186; that stretch reads RNRPHICSFWVKGECKRGEECPYRHEKP. At K212 the chain carries N6-acetyllysine. Residues 232-305 enclose the RRM domain; it reads TTLYVGGLGD…RRLNVKWGRS (74 aa). K290 participates in a covalent cross-link: Glycyl lysine isopeptide (Lys-Gly) (interchain with G-Cter in SUMO2). Disordered regions lie at residues 303–343 and 371–420; these read GRSQ…AAEE and IAPP…HSSP. The segment covering 309–318 has biased composition (basic and acidic residues); sequence RGKEKEKDGT.

It belongs to the SLT11 family. In terms of assembly, component of the pre-catalytic and catalytic spliceosome complexes. Component of the postcatalytic spliceosome P complex. Interacts with PDCD6; the interaction induces translocation of PDCD6 in the cytoplasm. Interacts with PPIL1.

It is found in the nucleus. The protein localises to the cytoplasm. Its function is as follows. Required for pre-mRNA splicing as component of the activated spliceosome. Involved in the first step of pre-mRNA splicing. Binds directly to the internal stem-loop (ISL) domain of the U6 snRNA and to the pre-mRNA intron near the 5' splice site during the activation and catalytic phases of the spliceosome cycle. Involved in both translocations of the nuclear SLU7 to the cytoplasm and the cytosolic calcium-binding protein PDCD6 to the nucleus upon cellular stress responses. The sequence is that of Pre-mRNA-splicing factor RBM22 (Rbm22) from Rattus norvegicus (Rat).